We begin with the raw amino-acid sequence, 159 residues long: SsrA-binding protein (159 aa).

It belongs to the SmpB family.

The protein resides in the cytoplasm. Required for rescue of stalled ribosomes mediated by trans-translation. Binds to transfer-messenger RNA (tmRNA), required for stable association of tmRNA with ribosomes. tmRNA and SmpB together mimic tRNA shape, replacing the anticodon stem-loop with SmpB. tmRNA is encoded by the ssrA gene; the 2 termini fold to resemble tRNA(Ala) and it encodes a 'tag peptide', a short internal open reading frame. During trans-translation Ala-aminoacylated tmRNA acts like a tRNA, entering the A-site of stalled ribosomes, displacing the stalled mRNA. The ribosome then switches to translate the ORF on the tmRNA; the nascent peptide is terminated with the 'tag peptide' encoded by the tmRNA and targeted for degradation. The ribosome is freed to recommence translation, which seems to be the essential function of trans-translation. The chain is SsrA-binding protein from Actinobacillus pleuropneumoniae serotype 5b (strain L20).